An 87-amino-acid polypeptide reads, in one-letter code: Phosphoribosyl-ATP pyrophosphatase (87 aa).

It belongs to the PRA-PH family.

The protein resides in the cytoplasm. The catalysed reaction is 1-(5-phospho-beta-D-ribosyl)-ATP + H2O = 1-(5-phospho-beta-D-ribosyl)-5'-AMP + diphosphate + H(+). It functions in the pathway amino-acid biosynthesis; L-histidine biosynthesis; L-histidine from 5-phospho-alpha-D-ribose 1-diphosphate: step 2/9. The sequence is that of Phosphoribosyl-ATP pyrophosphatase from Bifidobacterium longum (strain DJO10A).